We begin with the raw amino-acid sequence, 487 residues long: V-type proton ATPase subunit B2 (487 aa).

G2 is modified (N-acetylglycine).

It belongs to the ATPase alpha/beta chains family. In terms of assembly, V-ATPase is a heteromultimeric enzyme composed of a peripheral catalytic V1 complex (components A to H) attached to an integral membrane V0 proton pore complex (components: a, c, c'', d and e).

The protein localises to the vacuole membrane. In terms of biological role, non-catalytic subunit of the peripheral V1 complex of vacuolar ATPase. V-ATPase is responsible for acidifying a variety of intracellular compartments in eukaryotic cells. The polypeptide is V-type proton ATPase subunit B2 (VHA-B2) (Arabidopsis thaliana (Mouse-ear cress)).